Reading from the N-terminus, the 118-residue chain is MSCQQSQQQCQPPPKCTPKCPPKCTPKCPPKCPPKCPPQCSAPCPPPVSSCCGSSSGGCCSSEGGGCCLSHHRPRQSLRRRPQSSSCCGSGSGQQSGGSSCCHSSGGSGCCHSSGGCC.

Residues 1 to 10 (MSCQQSQQQC) show a composition bias toward low complexity. 2 disordered regions span residues 1–32 (MSCQQSQQQCQPPPKCTPKCPPKCTPKCPPKC) and 72–118 (HRPR…GGCC). The segment covering 11-32 (QPPPKCTPKCPPKCTPKCPPKC) has biased composition (pro residues). Positions 72 to 82 (HRPRQSLRRRP) are enriched in basic residues. Residues 97-118 (GGSSCCHSSGGSGCCHSSGGCC) are compositionally biased toward low complexity.

The protein belongs to the LCE family. Interacts with CYSRT1; the interaction is direct. As to expression, skin-specific. Expression was readily detected in adult trunk skin, adult arm skin, fetal skin, penal skin, vulva, esophagus and tongue. Not expressed in the cervix, rectum, lung, colon, or placenta. Expression is observed in the heart.

In terms of biological role, precursors of the cornified envelope of the stratum corneum. This Homo sapiens (Human) protein is Late cornified envelope protein 5A (LCE5A).